The following is an 89-amino-acid chain: Signal recognition particle 19 kDa protein (89 aa).

The protein belongs to the SRP19 family. As to quaternary structure, part of the signal recognition particle protein translocation system, which is composed of SRP and FtsY. Archaeal SRP consists of a 7S RNA molecule of 300 nucleotides and two protein subunits: SRP54 and SRP19.

It localises to the cytoplasm. Involved in targeting and insertion of nascent membrane proteins into the cytoplasmic membrane. Binds directly to 7S RNA and mediates binding of the 54 kDa subunit of the SRP. This Methanococcus vannielii (strain ATCC 35089 / DSM 1224 / JCM 13029 / OCM 148 / SB) protein is Signal recognition particle 19 kDa protein.